The following is a 213-amino-acid chain: Redox-sensing transcriptional repressor Rex (213 aa).

A DNA-binding region (H-T-H motif) is located at residues 17–56 (LYYRIFKRFHSENIEKASSKQIAEAIGIDSATVRRDFSYF). 91-96 (GVGNIG) contacts NAD(+).

This sequence belongs to the transcriptional regulatory Rex family. Homodimer.

It is found in the cytoplasm. Functionally, modulates transcription in response to changes in cellular NADH/NAD(+) redox state. In Streptococcus mutans serotype c (strain ATCC 700610 / UA159), this protein is Redox-sensing transcriptional repressor Rex.